The following is a 492-amino-acid chain: 3-ketoacyl-CoA synthase 5 (492 aa).

2 helical membrane passes run 20-40 (LINN…AIEL) and 59-79 (LLHI…YFMS). An FAE domain is found at 76-365 (YFMSKPRTVY…FLSSLIGRKI (290 aa)). Residues cysteine 220, histidine 299, histidine 383, histidine 387, histidine 416, and asparagine 420 contribute to the active site.

This sequence belongs to the thiolase-like superfamily. Chalcone/stilbene synthases family. As to expression, expressed in siliques, flowers, leaves and seedlings.

It localises to the membrane. The enzyme catalyses a very-long-chain acyl-CoA + malonyl-CoA + H(+) = a very-long-chain 3-oxoacyl-CoA + CO2 + CoA. Its pathway is lipid metabolism; fatty acid biosynthesis. With respect to regulation, inhibited by K3 herbicides such as alachlor, allidochlor, anilofos, cafenstrole and flufenacet. Strongly inhibited by metazachlor and mefluidide. Mediates mostly the synthesis of VLCFAs from 26 to 30 carbons in length (e.g. C20:1, C26, C28, C30). The chain is 3-ketoacyl-CoA synthase 5 from Arabidopsis thaliana (Mouse-ear cress).